A 335-amino-acid polypeptide reads, in one-letter code: NADH-quinone oxidoreductase subunit H (335 aa).

A run of 8 helical transmembrane segments spans residues 12–32 (IIAV…GALL), 81–101 (VIFT…FAVI), 114–134 (IGLL…LFAG), 154–174 (VSYE…VGSF), 187–207 (LWFI…GVAV), 238–258 (FFVG…TLFF), 270–290 (SLAF…FILL), and 307–327 (WKFC…IVLL).

The protein belongs to the complex I subunit 1 family. As to quaternary structure, NDH-1 is composed of 13 different subunits. Subunits NuoA, H, J, K, L, M, N constitute the membrane sector of the complex.

Its subcellular location is the cell inner membrane. The enzyme catalyses a quinone + NADH + 5 H(+)(in) = a quinol + NAD(+) + 4 H(+)(out). In terms of biological role, NDH-1 shuttles electrons from NADH, via FMN and iron-sulfur (Fe-S) centers, to quinones in the respiratory chain. The immediate electron acceptor for the enzyme in this species is believed to be ubiquinone. Couples the redox reaction to proton translocation (for every two electrons transferred, four hydrogen ions are translocated across the cytoplasmic membrane), and thus conserves the redox energy in a proton gradient. This subunit may bind ubiquinone. The sequence is that of NADH-quinone oxidoreductase subunit H from Pseudomonas syringae pv. syringae (strain B728a).